The chain runs to 213 residues: Motile sperm domain-containing protein 1 (213 aa).

One can recognise an MSP domain in the interval 16-143; that stretch reads PVFVFPTELI…KEHLTESLFF (128 aa). 2 helical membrane-spanning segments follow: residues 159 to 179 and 191 to 211; these read SLLT…PTLG and LSVN…MAIL. Positions 205 to 208 match the Nuclear export signal motif; it reads LITM.

It localises to the endoplasmic reticulum membrane. It is found in the golgi apparatus membrane. In terms of biological role, plays a role in differentiation and/or proliferation of mesenchymal stem cells. Proposed to be involved in epithelial-to-mesenchymal transition (EMT). However, another study suggests that it is not required for EMT or stem cell self-renewal and acts during later stages of differentiation. This Homo sapiens (Human) protein is Motile sperm domain-containing protein 1 (MOSPD1).